The chain runs to 127 residues: Modulator protein MzrA (127 aa).

Over M1–R10 the chain is Cytoplasmic. The helical transmembrane segment at L11 to L31 threads the bilayer. Residues Q32–G127 are Periplasmic-facing.

It belongs to the MzrA family. Interacts with EnvZ.

The protein localises to the cell inner membrane. In terms of biological role, modulates the activity of the EnvZ/OmpR two-component regulatory system, probably by directly modulating EnvZ enzymatic activity and increasing stability of phosphorylated OmpR. This is Modulator protein MzrA from Enterobacter sp. (strain 638).